The primary structure comprises 465 residues: NADH-quinone oxidoreductase subunit N (465 aa).

The next 13 membrane-spanning stretches (helical) occupy residues 6–26 (ILPETFSIISSLVLLLLGIVF), 30–50 (TINLLALGCTVITLIILILSA), 66–86 (LYIRSAQGLILIAGILVLLLL), 98–118 (SILILFTLFGMITLVSANNLI), 156–176 (ALSSCIMLYGMSLLYGYTGLV), 194–214 (IVFGLVLILIGLCFKLAIAPF), 226–246 (PTIVTAFFSTVPKAALVTFLI), 261–281 (FQPVLLYISALSVLISAFGAL), 289–309 (LLAYSSIGHIGFILASLSIFT), 317–337 (LIYLVIYIITNIGLFSYFIQI), 363–383 (ILLFSMAGIPPLAGFFAKLFI), 391–411 (GFIGMSLIFIVASVISCYYYL), and 432–452 (SLFIVTSVASLINIVLFMCVE).

It belongs to the complex I subunit 2 family. As to quaternary structure, NDH-1 is composed of 14 different subunits. Subunits NuoA, H, J, K, L, M, N constitute the membrane sector of the complex.

Its subcellular location is the cell membrane. It catalyses the reaction a quinone + NADH + 5 H(+)(in) = a quinol + NAD(+) + 4 H(+)(out). NDH-1 shuttles electrons from NADH, via FMN and iron-sulfur (Fe-S) centers, to quinones in the respiratory chain. The immediate electron acceptor for the enzyme in this species is believed to be ubiquinone. Couples the redox reaction to proton translocation (for every two electrons transferred, four hydrogen ions are translocated across the cytoplasmic membrane), and thus conserves the redox energy in a proton gradient. This is NADH-quinone oxidoreductase subunit N from Wolbachia sp. subsp. Brugia malayi (strain TRS).